Consider the following 425-residue polypeptide: Raffinose permease (425 aa).

Residues 1–11 (MNSASTHKNTD) lie on the Cytoplasmic side of the membrane. The helical transmembrane segment at 12–32 (FWIFGLFFFLYFFIMATCFPF) threads the bilayer. The Periplasmic portion of the chain corresponds to 33-48 (LPVWLSDVVGLSKTDT). A helical transmembrane segment spans residues 49 to 69 (GIVFSCLSLFAISFQPLLGVI). The Cytoplasmic segment spans residues 70–78 (SDRLGLKKN). A helical transmembrane segment spans residues 79–99 (LIWSISLLLVFFAPFFLYVFA). Topologically, residues 100-105 (PLLHLN) are periplasmic. A helical transmembrane segment spans residues 106–126 (IWAGALTGGVFIGFVFSAGAG). Residues 127–147 (AIEAYIERVSRSSGFEYGKAR) are Cytoplasmic-facing. The helical transmembrane segment at 148 to 168 (MFGCLGWALCATMAGILFNVD) threads the bilayer. Position 169 (P169) is a topological domain, periplasmic. A helical membrane pass occupies residues 170–190 (SLVFWMGSGGALLLLLLLYLA). The Cytoplasmic portion of the chain corresponds to 191-229 (RPSTSQTAMVMNALGANSSLISTRMVFSLFRMRQMWMFV). A helical membrane pass occupies residues 230–250 (LYTIGVACVYDVFDQQFAIFF). At 251–265 (RSFFDTPQAGIKAFG) the chain is on the periplasmic side. A helical transmembrane segment spans residues 266-286 (FATTAGEICNAIIMFCTPWII). At 287–294 (NRIGAKNT) the chain is on the cytoplasmic side. Residues 295-315 (LLVAGGIMTIRITGSAFATTM) form a helical membrane-spanning segment. Position 316 (T316) is a topological domain, periplasmic. Residues 317 to 337 (EVVILKMLHALEVPFLLVGAF) traverse the membrane as a helical segment. Residues 338-351 (KYITGVFDTRLSAT) are Cytoplasmic-facing. Residues 352–372 (VYLIGFQFSKQLAAILLSTFA) traverse the membrane as a helical segment. The Periplasmic segment spans residues 373–383 (GHLYDRMGFQN). A helical transmembrane segment spans residues 384-404 (TYFVLGMIVLTVTVISAFTLS). Topologically, residues 405–425 (SSPGIVHPSVEKAPVAHSEIN) are cytoplasmic.

This sequence belongs to the major facilitator superfamily. Oligosaccharide:H(+) symporter (OHS) (TC 2.A.1.5) family. In terms of assembly, monomer.

It localises to the cell inner membrane. Responsible for transport of raffinose into the cell. Can also transport lactose and melibiose. Has weak activity with maltose. In Escherichia coli, this protein is Raffinose permease.